We begin with the raw amino-acid sequence, 280 residues long: Acetyl-coenzyme A carboxylase carboxyl transferase subunit beta (280 aa).

One can recognise a CoA carboxyltransferase N-terminal domain in the interval 28–280 (LFLACPYCGA…IVRLHTAEAE (253 aa)). Cys-32, Cys-35, Cys-50, and Cys-53 together coordinate Zn(2+). A C4-type zinc finger spans residues 32-53 (CPYCGAQMYNKQLGKYRVCAKC).

It belongs to the AccD/PCCB family. In terms of assembly, acetyl-CoA carboxylase is a heterohexamer composed of biotin carboxyl carrier protein (AccB), biotin carboxylase (AccC) and two subunits each of ACCase subunit alpha (AccA) and ACCase subunit beta (AccD). It depends on Zn(2+) as a cofactor.

The protein resides in the cytoplasm. It catalyses the reaction N(6)-carboxybiotinyl-L-lysyl-[protein] + acetyl-CoA = N(6)-biotinyl-L-lysyl-[protein] + malonyl-CoA. It functions in the pathway lipid metabolism; malonyl-CoA biosynthesis; malonyl-CoA from acetyl-CoA: step 1/1. Component of the acetyl coenzyme A carboxylase (ACC) complex. Biotin carboxylase (BC) catalyzes the carboxylation of biotin on its carrier protein (BCCP) and then the CO(2) group is transferred by the transcarboxylase to acetyl-CoA to form malonyl-CoA. The chain is Acetyl-coenzyme A carboxylase carboxyl transferase subunit beta from Leuconostoc mesenteroides subsp. mesenteroides (strain ATCC 8293 / DSM 20343 / BCRC 11652 / CCM 1803 / JCM 6124 / NCDO 523 / NBRC 100496 / NCIMB 8023 / NCTC 12954 / NRRL B-1118 / 37Y).